A 243-amino-acid polypeptide reads, in one-letter code: Probable flavin-dependent thymidylate synthase (243 aa).

A ThyX domain is found at 21–239 (FEVDDFEESK…PNTYQDIPDV (219 aa)). FAD contacts are provided by residues Ser80 and 103 to 105 (RHR). DUMP is bound by residues 100–103 (ELER), 113–115 (SQR), and Arg178. A ThyX motif motif is present at residues 103 to 113 (RHRHLSFSVVS). 194–196 (NHR) serves as a coordination point for FAD. Arg205 contacts dUMP. Arg205 acts as the Involved in ionization of N3 of dUMP, leading to its activation in catalysis.

The protein belongs to the thymidylate synthase ThyX family. In terms of assembly, homotetramer. FAD serves as cofactor.

It catalyses the reaction dUMP + (6R)-5,10-methylene-5,6,7,8-tetrahydrofolate + NADPH + H(+) = dTMP + (6S)-5,6,7,8-tetrahydrofolate + NADP(+). The protein operates within pyrimidine metabolism; dTTP biosynthesis. Its function is as follows. Catalyzes the reductive methylation of 2'-deoxyuridine-5'-monophosphate (dUMP) to 2'-deoxythymidine-5'-monophosphate (dTMP) while utilizing 5,10-methylenetetrahydrofolate (mTHF) as the methyl donor, and NADPH and FADH(2) as the reductant. The sequence is that of Probable flavin-dependent thymidylate synthase (48) from Mycobacterium phage L5 (Mycobacteriophage L5).